The chain runs to 312 residues: tRNA dimethylallyltransferase (312 aa).

An ATP-binding site is contributed by 11–18; that stretch reads GPTAAGKS. Position 13-18 (13-18) interacts with substrate; that stretch reads TAAGKS. Interaction with substrate tRNA stretches follow at residues 36–39, 160–164, and 243–248; these read DSAT, QRIQR, and RCVGYR.

It belongs to the IPP transferase family. Monomer. Requires Mg(2+) as cofactor.

The catalysed reaction is adenosine(37) in tRNA + dimethylallyl diphosphate = N(6)-dimethylallyladenosine(37) in tRNA + diphosphate. In terms of biological role, catalyzes the transfer of a dimethylallyl group onto the adenine at position 37 in tRNAs that read codons beginning with uridine, leading to the formation of N6-(dimethylallyl)adenosine (i(6)A). The protein is tRNA dimethylallyltransferase of Bordetella avium (strain 197N).